Reading from the N-terminus, the 82-residue chain is Large ribosomal subunit protein bL27 (82 aa).

Residues 1–54 (MAHKKGQGASRNGRDSESKRLGMKVGAGQRVSTGSILVRQRGTKWHPSQNVGRG) form a disordered region.

The protein belongs to the bacterial ribosomal protein bL27 family.

The chain is Large ribosomal subunit protein bL27 from Chlamydia caviae (strain ATCC VR-813 / DSM 19441 / 03DC25 / GPIC) (Chlamydophila caviae).